The primary structure comprises 308 residues: Ribonuclease H2 subunit B (308 aa).

An N-acetylalanine modification is found at Ala2. Lys292 bears the N6-acetyllysine mark. Ser293 is modified (phosphoserine).

This sequence belongs to the RNase H2 subunit B family. As to quaternary structure, the RNase H2 complex is a heterotrimer composed of the catalytic subunit RNASEH2A and the non-catalytic subunits RNASEH2B and RNASEH2C.

Its subcellular location is the nucleus. In terms of biological role, non catalytic subunit of RNase H2, an endonuclease that specifically degrades the RNA of RNA:DNA hybrids. Participates in DNA replication, possibly by mediating the removal of lagging-strand Okazaki fragment RNA primers during DNA replication. Mediates the excision of single ribonucleotides from DNA:RNA duplexes. This chain is Ribonuclease H2 subunit B (Rnaseh2b), found in Mus musculus (Mouse).